The primary structure comprises 499 residues: Potassium voltage-gated channel subfamily A member 2 (499 aa).

Residues 1–27 form a disordered region; the sequence is MTVATGEPADEAAALPGHPQDTYDPEA. The segment at 1-125 is tetramerization domain; sequence MTVATGEPAD…YELGEEAMEM (125 aa). The Cytoplasmic portion of the chain corresponds to 1–160; that stretch reads MTVATGEPAD…LLFEYPESSG (160 aa). The helical transmembrane segment at 161–182 threads the bilayer; the sequence is PARIIAIVSVMVILISIVSFCL. The Extracellular segment spans residues 183–221; it reads ETLPIFRDENEDMHGGGVTFHTYSNSTIGYQQSTSFTDP. N-linked (GlcNAc...) asparagine glycosylation occurs at Asn-207. A helical transmembrane segment spans residues 222–243; sequence FFIVETLCIIWFSFEFLVRFFA. Residue Cys-244 is the site of S-palmitoyl cysteine attachment. Over 244–254 the chain is Cytoplasmic; it reads CPSKAGFFTNI. A helical membrane pass occupies residues 255 to 275; sequence MNIIDIVAIIPYFITLGTELA. Residues 276–289 lie on the Extracellular side of the membrane; the sequence is EKPEDAQQGQQAMS. A helical; Voltage-sensor membrane pass occupies residues 290-310; sequence LAILRVIRLVRVFRIFKLSRH. Over 311–325 the chain is Cytoplasmic; that stretch reads SKGLQILGQTLKASM. The tract at residues 312–325 is S4-S5 linker; sequence KGLQILGQTLKASM. A helical transmembrane segment spans residues 326 to 347; sequence RELGLLIFFLFIGVILFSSAVY. The Extracellular portion of the chain corresponds to 348 to 361; sequence FAEADERESQFPSI. Residues 362–373 constitute an intramembrane region (helical); sequence PDAFWWAVVSMT. Positions 374–379 match the Selectivity filter motif; it reads TVGYGD. The stretch at 374–381 is an intramembrane region; the sequence is TVGYGDMV. Residues 382–388 lie on the Extracellular side of the membrane; that stretch reads PTTIGGK. Residues 389 to 417 traverse the membrane as a helical segment; it reads IVGSLCAIAGVLTIALPVPVIVSNFNYFY. The Cytoplasmic segment spans residues 418-499; that stretch reads HRETEGEEQA…VNITKMLTDV (82 aa). Tyr-429 is subject to Phosphotyrosine. Phosphoserine is present on residues Ser-434, Ser-440, Ser-441, and Ser-449. Residue Tyr-458 is modified to Phosphotyrosine. A Phosphoserine modification is found at Ser-468. The short motif at 497–499 is the PDZ-binding element; that stretch reads TDV.

The protein belongs to the potassium channel family. A (Shaker) (TC 1.A.1.2) subfamily. Kv1.2/KCNA2 sub-subfamily. Homotetramer and heterotetramer with other channel-forming alpha subunits, such as KCNA1, KCNA4, KCNA5, KCNA6 and KCNA7. Channel activity is regulated by interaction with the beta subunits, including KCNAB1 and KCNAB2. Identified in a complex with KCNA1 and KCNAB2. Identified in a complex with KCNA5 and KCNAB1. Interacts with the beta subunit KCNAB1. Identified in a complex with KCNA4 and FYN. Interacts with PTK2B. Interacts (via C-terminus) with CTTN. Interacts (via N-terminal cytoplasmic domain) with RHOA (GTP-bound form); this regulates channel activity by reducing location at the cell surface in response to CHRM1 activation. Interacts with DRD2. Interacts with SIGMAR1; cocaine consumption leads to increased interaction. Interacts with ADAM22. Interacts with CNTNAP2. Interacts (via C-terminus) with the PDZ domains of DLG1, DLG2 and DLG4. Interacts with ADAM11. Interacts with LYNX1. In terms of processing, phosphorylated on tyrosine residues; phosphorylation increases in response to ischemia. Phosphorylated on tyrosine residues by activated PTK2B/PYK2. Phosphorylation on tyrosine residues suppresses ion channel activity. Phosphorylated on tyrosine residues in response to CHRM1 activation; this abolishes interaction with CTTN. This is probably due to endocytosis of the phosphorylated channel subunits. Phosphorylated on serine residues in response to increased cAMP levels; phosphorylation is apparently not catalyzed by PKA. N-glycosylated, with complex, sialylated N-glycans. As to expression, expressed in a wide variety of gastrointestinal smooth muscles. Not expressed in portal vein, renal artery, and uterus.

The protein resides in the cell membrane. The protein localises to the membrane. It localises to the cell projection. It is found in the axon. Its subcellular location is the synapse. The protein resides in the presynaptic cell membrane. The protein localises to the synaptosome. It localises to the endoplasmic reticulum membrane. It is found in the dendrite. Its subcellular location is the lamellipodium membrane. The protein resides in the cell junction. The protein localises to the paranodal septate junction. It carries out the reaction K(+)(in) = K(+)(out). With respect to regulation, inhibited by 4-aminopyridine (4-AP). Inhibited by dendrotoxin (DTX) and charybdotoxin (CTX), but not by tetraethylammonium (TEA). Inhibited by tityustoxin-K alpha (TsTX-Kalpha), a toxin that is highly specific for KCNA2. Inhibited by maurotoxin. Inhibited by kappaM conotoxins kappaM-RIIIJ and kappaM-RIIIK. Functionally, voltage-gated potassium channel that mediates transmembrane potassium transport in excitable membranes, primarily in the brain and the central nervous system, but also in the cardiovascular system. Prevents aberrant action potential firing and regulates neuronal output. Forms tetrameric potassium-selective channels through which potassium ions pass in accordance with their electrochemical gradient. The channel alternates between opened and closed conformations in response to the voltage difference across the membrane. Can form functional homotetrameric channels and heterotetrameric channels that contain variable proportions of KCNA1, KCNA2, KCNA4, KCNA5, KCNA6, KCNA7, and possibly other family members as well; channel properties depend on the type of alpha subunits that are part of the channel. Channel properties are modulated by cytoplasmic beta subunits that regulate the subcellular location of the alpha subunits and promote rapid inactivation of delayed rectifier potassium channels. In vivo, membranes probably contain a mixture of heteromeric potassium channel complexes, making it difficult to assign currents observed in intact tissues to any particular potassium channel family member. Homotetrameric KCNA2 forms a delayed-rectifier potassium channel that opens in response to membrane depolarization, followed by slow spontaneous channel closure. In contrast, a heteromultimer formed by KCNA2 and KCNA4 shows rapid inactivation. Regulates neuronal excitability and plays a role as pacemaker in the regulation of neuronal action potentials. KCNA2-containing channels play a presynaptic role and prevent hyperexcitability and aberrant action potential firing. Response to toxins that are selective for KCNA2-containing potassium channels suggests that in Purkinje cells, dendritic subthreshold KCNA2-containing potassium channels prevent random spontaneous calcium spikes, suppressing dendritic hyperexcitability without hindering the generation of somatic action potentials, and thereby play an important role in motor coordination. Plays a role in the induction of long-term potentiation of neuron excitability in the CA3 layer of the hippocampus. May function as down-stream effector for G protein-coupled receptors and inhibit GABAergic inputs to basolateral amygdala neurons. May contribute to the regulation of neurotransmitter release, such as gamma-aminobutyric acid (GABA). Contributes to the regulation of the axonal release of the neurotransmitter dopamine. Reduced KCNA2 expression plays a role in the perception of neuropathic pain after peripheral nerve injury, but not acute pain. Plays a role in the regulation of the time spent in non-rapid eye movement (NREM) sleep. This chain is Potassium voltage-gated channel subfamily A member 2 (KCNA2), found in Canis lupus familiaris (Dog).